The chain runs to 283 residues: uncharacterized protein (283 aa).

This is an uncharacterized protein from Methanocaldococcus jannaschii (strain ATCC 43067 / DSM 2661 / JAL-1 / JCM 10045 / NBRC 100440) (Methanococcus jannaschii).